A 697-amino-acid polypeptide reads, in one-letter code: Long-chain-fatty-acid--CoA ligase 6 (697 aa).

A helical; Signal-anchor for type III membrane protein transmembrane segment spans residues L25–T45. Residues H46–M697 are Cytoplasmic-facing.

Belongs to the ATP-dependent AMP-binding enzyme family. Mg(2+) serves as cofactor. As to expression, expressed predominantly in erythrocyte precursors, in particular in reticulocytes, fetal blood cells derived from fetal liver, hemopoietic stem cells from cord blood, bone marrow and brain.

It localises to the mitochondrion outer membrane. It is found in the peroxisome membrane. The protein localises to the microsome membrane. The protein resides in the endoplasmic reticulum membrane. The catalysed reaction is a long-chain fatty acid + ATP + CoA = a long-chain fatty acyl-CoA + AMP + diphosphate. It catalyses the reaction (5Z,8Z,11Z,14Z)-eicosatetraenoate + ATP + CoA = (5Z,8Z,11Z,14Z)-eicosatetraenoyl-CoA + AMP + diphosphate. The enzyme catalyses hexadecanoate + ATP + CoA = hexadecanoyl-CoA + AMP + diphosphate. It carries out the reaction (E)-hexadec-2-enoate + ATP + CoA = (2E)-hexadecenoyl-CoA + AMP + diphosphate. The catalysed reaction is 15-hydroxy-(5Z,8Z,11Z,13E)-eicosatetraenoate + ATP + CoA = 15-hydroxy-(5Z,8Z,11Z,13E)-eicosatetraenoyl-CoA + AMP + diphosphate. It catalyses the reaction 12-hydroxy-(5Z,8Z,10E,14Z)-eicosatetraenoate + ATP + CoA = 12-hydroxy-(5Z,8Z,10E,14Z)-eicosatetraenoyl-CoA + AMP + diphosphate. The enzyme catalyses 5-hydroxy-(6E,8Z,11Z,14Z)-eicosatetraenoate + ATP + CoA = 5-hydroxy-(6E,8Z,11Z,14Z)-eicosatetraenoyl-CoA + AMP + diphosphate. In terms of biological role, catalyzes the conversion of long-chain fatty acids to their active form acyl-CoA for both synthesis of cellular lipids, and degradation via beta-oxidation. Plays an important role in fatty acid metabolism in brain and the acyl-CoAs produced may be utilized exclusively for the synthesis of the brain lipid. The polypeptide is Long-chain-fatty-acid--CoA ligase 6 (Homo sapiens (Human)).